A 529-amino-acid polypeptide reads, in one-letter code: uncharacterized protein (529 aa).

The Arf-GAP domain maps to 13–129; the sequence is QTAMRKMRAL…LSTLCQEAQR (117 aa). The C4-type zinc-finger motif lies at 28 to 51; that stretch reads CFDCGARNPTWCTVTYGVFLCIDC. Residues 291-301 show a composition bias toward basic and acidic residues; it reads QMEAKVAKDPT. Disordered regions lie at residues 291–313, 335–357, 398–424, and 468–493; these read QMEA…GMGG, VLTF…DDKY, KSRY…GASP, and FGSE…SDLK. Low complexity predominate over residues 399–420; it reads SRYTASSSSSSTSRAPTTRLTA. Over residues 476 to 487 the composition is skewed to polar residues; that stretch reads NGSQQRQSSQVP.

In terms of biological role, GTPase-activating protein for the ADP ribosylation factor family. This is an uncharacterized protein from Caenorhabditis elegans.